The chain runs to 155 residues: DNA gyrase inhibitor (155 aa).

The protein belongs to the DNA gyrase inhibitor family. Interacts with DNA gyrase.

The protein localises to the cytoplasm. In terms of biological role, inhibits the supercoiling activity of DNA gyrase. Acts by inhibiting DNA gyrase at an early step, prior to (or at the step of) binding of DNA by the gyrase. It protects cells against toxins that target DNA gyrase, by inhibiting activity of these toxins and reducing the formation of lethal double-strand breaks in the cell. This is DNA gyrase inhibitor from Erwinia billingiae (strain Eb661).